Here is a 427-residue protein sequence, read N- to C-terminus: Trigger factor (427 aa).

Residues 163-248 form the PPIase FKBP-type domain; that stretch reads GDTVVIDFVG…IHEVKTKEVP (86 aa).

This sequence belongs to the FKBP-type PPIase family. Tig subfamily.

Its subcellular location is the cytoplasm. The catalysed reaction is [protein]-peptidylproline (omega=180) = [protein]-peptidylproline (omega=0). Its function is as follows. Involved in protein export. Acts as a chaperone by maintaining the newly synthesized protein in an open conformation. Functions as a peptidyl-prolyl cis-trans isomerase. In Streptococcus agalactiae serotype Ia (strain ATCC 27591 / A909 / CDC SS700), this protein is Trigger factor.